Reading from the N-terminus, the 336-residue chain is tRNA-modifying protein YgfZ (336 aa).

Folate contacts are provided by Trp-28 and Trp-191.

This sequence belongs to the tRNA-modifying YgfZ family.

The protein resides in the cytoplasm. Folate-binding protein involved in regulating the level of ATP-DnaA and in the modification of some tRNAs. It is probably a key factor in regulatory networks that act via tRNA modification, such as initiation of chromosomal replication. This is tRNA-modifying protein YgfZ from Hamiltonella defensa subsp. Acyrthosiphon pisum (strain 5AT).